The primary structure comprises 141 residues: Ribonuclease P protein component (141 aa).

Positions 114-134 (RRIKAKGERRGDGKRRTERPE) are enriched in basic and acidic residues. Residues 114 to 141 (RRIKAKGERRGDGKRRTERPESGPVNGK) form a disordered region.

This sequence belongs to the RnpA family. In terms of assembly, consists of a catalytic RNA component (M1 or rnpB) and a protein subunit.

The enzyme catalyses Endonucleolytic cleavage of RNA, removing 5'-extranucleotides from tRNA precursor.. Its function is as follows. RNaseP catalyzes the removal of the 5'-leader sequence from pre-tRNA to produce the mature 5'-terminus. It can also cleave other RNA substrates such as 4.5S RNA. The protein component plays an auxiliary but essential role in vivo by binding to the 5'-leader sequence and broadening the substrate specificity of the ribozyme. This is Ribonuclease P protein component from Brucella anthropi (strain ATCC 49188 / DSM 6882 / CCUG 24695 / JCM 21032 / LMG 3331 / NBRC 15819 / NCTC 12168 / Alc 37) (Ochrobactrum anthropi).